The following is a 208-amino-acid chain: Putative dioxygenase RBE_0329 (208 aa).

Belongs to the intradiol ring-cleavage dioxygenase family.

This is Putative dioxygenase RBE_0329 from Rickettsia bellii (strain RML369-C).